The following is a 315-amino-acid chain: Putative 2-hydroxyacid dehydrogenase HI_1556 (315 aa).

NAD(+) contacts are provided by residues threonine 73, 156-157 (CL), 231-233 (TGR), and aspartate 257. Arginine 233 is an active-site residue. The active site involves glutamate 262. Histidine 285 (proton donor) is an active-site residue. 285-288 (HIAW) is a binding site for NAD(+).

Belongs to the D-isomer specific 2-hydroxyacid dehydrogenase family.

This Haemophilus influenzae (strain ATCC 51907 / DSM 11121 / KW20 / Rd) protein is Putative 2-hydroxyacid dehydrogenase HI_1556.